The primary structure comprises 243 residues: 7-cyano-7-deazaguanine synthase (243 aa).

ATP is bound at residue phenylalanine 14 to leucine 24. Cysteine 202, cysteine 217, cysteine 220, and cysteine 223 together coordinate Zn(2+).

Belongs to the QueC family. Zn(2+) is required as a cofactor.

It carries out the reaction 7-carboxy-7-deazaguanine + NH4(+) + ATP = 7-cyano-7-deazaguanine + ADP + phosphate + H2O + H(+). Its pathway is purine metabolism; 7-cyano-7-deazaguanine biosynthesis. Functionally, catalyzes the ATP-dependent conversion of 7-carboxy-7-deazaguanine (CDG) to 7-cyano-7-deazaguanine (preQ(0)). This chain is 7-cyano-7-deazaguanine synthase, found in Paraburkholderia phymatum (strain DSM 17167 / CIP 108236 / LMG 21445 / STM815) (Burkholderia phymatum).